Reading from the N-terminus, the 485-residue chain is MLHIYNTLSRTKEPFKPAHAGQVRMYVCGMTVYDYCHLGHARMLVAFDVVQRWLRASGLAVDYVRNITDIDDKIIRRAVETGRRIGEVTEYYIAAMHADERALGVQPPDREPRATQYVGEMLDIIGRLESKGLAYRAEDGDVNYAVRGFADYGKLSGKSLDDLRAGERVAVGSAKRDPLDFVLWKSAKPQEPDDTKWESPYGLGRPGWHIECSAMSKTLLGLPLDIHGGGPDLKFPHHENEIAQTEGAFGGALANVWMHCGPLMVDADKMSKSLGNFRTIRQTIAQGALSDTQAEYAVNPREAEMLRFFIVRNHYRSPQNYAPDNLVDAQNALDRLYQALQNTAADGQGVDWSEPQAQAFKAAMDDDFNSSGAVAALFELASEANRTGSARAAGQLKALGAVLGLLQQDPPAYFQSPTRYSAAAREQGAPAAALDAAAIEARIAERAAAKAARDFARADAIRAELRAAGVELDDKPGGLTQWRRA.

C28 provides a ligand contact to Zn(2+). Residues 30–40 (MTVYDYCHLGH) carry the 'HIGH' region motif. Zn(2+) is bound by residues C212, H237, and E241. Residues 269–273 (KMSKS) carry the 'KMSKS' region motif. Position 272 (K272) interacts with ATP.

Belongs to the class-I aminoacyl-tRNA synthetase family. As to quaternary structure, monomer. It depends on Zn(2+) as a cofactor.

The protein resides in the cytoplasm. It carries out the reaction tRNA(Cys) + L-cysteine + ATP = L-cysteinyl-tRNA(Cys) + AMP + diphosphate. The sequence is that of Cysteine--tRNA ligase from Bordetella bronchiseptica (strain ATCC BAA-588 / NCTC 13252 / RB50) (Alcaligenes bronchisepticus).